Consider the following 193-residue polypeptide: 7-methyl-GTP pyrophosphatase (193 aa).

Asp70 acts as the Proton acceptor in catalysis.

It belongs to the Maf family. YceF subfamily. The cofactor is a divalent metal cation.

It localises to the cytoplasm. The enzyme catalyses N(7)-methyl-GTP + H2O = N(7)-methyl-GMP + diphosphate + H(+). Its function is as follows. Nucleoside triphosphate pyrophosphatase that hydrolyzes 7-methyl-GTP (m(7)GTP). May have a dual role in cell division arrest and in preventing the incorporation of modified nucleotides into cellular nucleic acids. This Photobacterium profundum (strain SS9) protein is 7-methyl-GTP pyrophosphatase.